A 787-amino-acid polypeptide reads, in one-letter code: Endonuclease MutS2 (787 aa).

An ATP-binding site is contributed by 336–343 (GPNTGGKT). Positions 712–787 (LDLRGVRYED…GNGATEVQFK (76 aa)) constitute a Smr domain.

This sequence belongs to the DNA mismatch repair MutS family. MutS2 subfamily. Homodimer. Binds to stalled ribosomes, contacting rRNA.

In terms of biological role, endonuclease that is involved in the suppression of homologous recombination and thus may have a key role in the control of bacterial genetic diversity. Acts as a ribosome collision sensor, splitting the ribosome into its 2 subunits. Detects stalled/collided 70S ribosomes which it binds and splits by an ATP-hydrolysis driven conformational change. Acts upstream of the ribosome quality control system (RQC), a ribosome-associated complex that mediates the extraction of incompletely synthesized nascent chains from stalled ribosomes and their subsequent degradation. Probably generates substrates for RQC. This is Endonuclease MutS2 from Lactiplantibacillus plantarum (strain ATCC BAA-793 / NCIMB 8826 / WCFS1) (Lactobacillus plantarum).